We begin with the raw amino-acid sequence, 352 residues long: Ion-translocating oxidoreductase complex subunit D (352 aa).

A run of 5 helical transmembrane segments spans residues 20 to 40 (IMLLVLLAAVPGIAAQLWFFG), 42 to 62 (GTLVQILLASVSALLAEALVL), 78 to 109 (ALLTGLLLAVSIPPLAPWWMVVLGTVFAVIIA), 123 to 143 (PAMIGYVVLLISFPVQMTSWL), and 148 to 168 (IAVNIPGFIDAIQVIFSGHTA). Thr187 is modified (FMN phosphoryl threonine). The next 4 helical transmembrane spans lie at 214-234 (ILAGAGWQWVNLAWLAGGVWL), 242-262 (WHIPLSFLVTLALCATLGWLF), 267-287 (LAAPQIHLLSGATMLGAFFIL), and 301-318 (LMFGALAGLLVWLIRSFG).

This sequence belongs to the NqrB/RnfD family. In terms of assembly, the complex is composed of six subunits: RsxA, RsxB, RsxC, RsxD, RsxE and RsxG. FMN serves as cofactor.

It localises to the cell inner membrane. Functionally, part of a membrane-bound complex that couples electron transfer with translocation of ions across the membrane. Required to maintain the reduced state of SoxR. The chain is Ion-translocating oxidoreductase complex subunit D from Shigella flexneri serotype 5b (strain 8401).